The sequence spans 607 residues: Autophagy-related protein 16-1 (607 aa).

The segment at 13-43 is interaction with ATG5; sequence WKRHISEQLRRRDRLQRQAFEEIILQYNKLL. The stretch at 79 to 230 forms a coiled coil; the sequence is DSQLQEMAQL…QKELAEAAKE (152 aa). Position 139 is a phosphoserine (serine 139). Positions 207-230 are WIPI2-binding; it reads AENEKDSRRRQARLQKELAEAAKE. The interval 230-242 is RB1CC1-binding; the sequence is EPLPVEQDDDIEV. Phosphoserine is present on residues serine 269 and serine 287. Residues 296-299 carry the Caspase cleavage motif; it reads DNVD. WD repeat units lie at residues 320 to 359, 364 to 403, 406 to 445, 447 to 484, 486 to 525, 532 to 573, and 575 to 607; these read AHDGEVNAVQFSPGSRLLATGGMDRRVKLWEVFGEKCEFK, GSNAGITSIEFDSAGSYLLAASNDFASRIWTVDDSRLRHT, GHSGKVLSAKFLLDNARIVSGSHDRTLKHWDLRSKVCIKT, FAGSSCNDIVCTEQCVMSGHFDKKIRFWDIRSESIVRE, ELLGKITALDLNPERTELLSCSRDDLLKVIDLRTNAIKQT, KCGS…KVLS, and QHSSSINAVAWSPSGLHVVSVDKGCKAVLWAQY.

Belongs to the WD repeat ATG16 family. Homodimer. Homooligomer. Heterooligomer with ATG16L2. Interacts with WIPI1. Interacts with WIPI2. Interacts with RB1CC1; the interaction is required for ULK1 complex-dependent autophagy. Interacts with ATG5. Part of the minor complex composed of 4 sets of ATG12-ATG5 and ATG16L1 (400 kDa); this complex interacts with ATG3 leading to disruption of ATG7 interaction and promotion of ATG8-like proteins lipidation. Part of the major complex composed of 8 sets of ATG12-ATG5 and ATG16L1 (800 kDa). Interacts with RAB33B (GTP- and GDP-bound forms); the complex consists of a tetramer where two RAB33B molecules bind independently one molecule of the ATG16L1 homodimer; the interaction promotes ATG12-ATG5-ATG16L1 complex recruitment to phagophores. Interacts (via WD repeats) with TMEM59; the interaction mediates unconventional autophagic activity of TMEM59. Interacts with TLR2. Interacts (via WD repeats) with MEFV. Interacts with PPP1CA; the interaction dephosphorylates ATG16L1 causing dissociation of ATG12-ATG5-ATG16L1 complex. Interacts (via N-terminal) with CLTC. Interacts with NOD1. Interacts with NOD2. Interacts with TUFM. Interacts with TRIM16. Interacts (via WD repeats) with SPATA33. Interacts with IRGM. Proteolytic cleavage by activated CASP3 leads to degradation and may regulate autophagy upon cellular stress and apoptotic stimuli. Post-translationally, phosphorylation at Ser-139 promotes association with the ATG12-ATG5 conjugate to form the ATG12-ATG5-ATG16L1 complex.

Its subcellular location is the cytoplasm. The protein resides in the preautophagosomal structure membrane. It localises to the endosome membrane. The protein localises to the lysosome membrane. Plays an essential role in both canonical and non-canonical autophagy: interacts with ATG12-ATG5 to mediate the lipidation to ATG8 family proteins (MAP1LC3A, MAP1LC3B, MAP1LC3C, GABARAPL1, GABARAPL2 and GABARAP). Acts as a molecular hub, coordinating autophagy pathways via distinct domains that support either canonical or non-canonical signaling. During canonical autophagy, interacts with ATG12-ATG5 to mediate the conjugation of phosphatidylethanolamine (PE) to ATG8 proteins, to produce a membrane-bound activated form of ATG8. Thereby, controls the elongation of the nascent autophagosomal membrane. As part of the ATG8 conjugation system with ATG5 and ATG12, required for recruitment of LRRK2 to stressed lysosomes and induction of LRRK2 kinase activity in response to lysosomal stress. Also involved in non-canonical autophagy, a parallel pathway involving conjugation of ATG8 proteins to single membranes at endolysosomal compartments, probably by catalyzing conjugation of phosphatidylserine (PS) to ATG8. Non-canonical autophagy plays a key role in epithelial cells to limit lethal infection by influenza A (IAV) virus. Regulates mitochondrial antiviral signaling (MAVS)-dependent type I interferon (IFN-I) production. Negatively regulates NOD1- and NOD2-driven inflammatory cytokine response. Instead, promotes an autophagy-dependent antibacterial pathway together with NOD1 or NOD2. Plays a role in regulating morphology and function of Paneth cell. The protein is Autophagy-related protein 16-1 of Pongo abelii (Sumatran orangutan).